The chain runs to 251 residues: Triosephosphate isomerase (251 aa).

9–11 lines the substrate pocket; it reads NWK. Catalysis depends on histidine 94, which acts as the Electrophile. Residue glutamate 166 is the Proton acceptor of the active site. Residues glycine 172, serine 211, and 232-233 each bind substrate; that span reads GG.

The protein belongs to the triosephosphate isomerase family. In terms of assembly, homodimer.

It is found in the cytoplasm. The catalysed reaction is D-glyceraldehyde 3-phosphate = dihydroxyacetone phosphate. It participates in carbohydrate biosynthesis; gluconeogenesis. The protein operates within carbohydrate degradation; glycolysis; D-glyceraldehyde 3-phosphate from glycerone phosphate: step 1/1. In terms of biological role, involved in the gluconeogenesis. Catalyzes stereospecifically the conversion of dihydroxyacetone phosphate (DHAP) to D-glyceraldehyde-3-phosphate (G3P). The sequence is that of Triosephosphate isomerase from Xanthomonas euvesicatoria pv. vesicatoria (strain 85-10) (Xanthomonas campestris pv. vesicatoria).